The chain runs to 293 residues: Phosphatidylserine decarboxylase proenzyme (293 aa).

Active-site charge relay system; for autoendoproteolytic cleavage activity residues include Asp90, His147, and Ser254. Catalysis depends on Ser254, which acts as the Schiff-base intermediate with substrate; via pyruvic acid; for decarboxylase activity. Pyruvic acid (Ser); by autocatalysis is present on Ser254.

Belongs to the phosphatidylserine decarboxylase family. PSD-B subfamily. Prokaryotic type I sub-subfamily. As to quaternary structure, heterodimer of a large membrane-associated beta subunit and a small pyruvoyl-containing alpha subunit. Pyruvate is required as a cofactor. Is synthesized initially as an inactive proenzyme. Formation of the active enzyme involves a self-maturation process in which the active site pyruvoyl group is generated from an internal serine residue via an autocatalytic post-translational modification. Two non-identical subunits are generated from the proenzyme in this reaction, and the pyruvate is formed at the N-terminus of the alpha chain, which is derived from the carboxyl end of the proenzyme. The autoendoproteolytic cleavage occurs by a canonical serine protease mechanism, in which the side chain hydroxyl group of the serine supplies its oxygen atom to form the C-terminus of the beta chain, while the remainder of the serine residue undergoes an oxidative deamination to produce ammonia and the pyruvoyl prosthetic group on the alpha chain. During this reaction, the Ser that is part of the protease active site of the proenzyme becomes the pyruvoyl prosthetic group, which constitutes an essential element of the active site of the mature decarboxylase.

It localises to the cell membrane. It carries out the reaction a 1,2-diacyl-sn-glycero-3-phospho-L-serine + H(+) = a 1,2-diacyl-sn-glycero-3-phosphoethanolamine + CO2. It participates in phospholipid metabolism; phosphatidylethanolamine biosynthesis; phosphatidylethanolamine from CDP-diacylglycerol: step 2/2. Catalyzes the formation of phosphatidylethanolamine (PtdEtn) from phosphatidylserine (PtdSer). The protein is Phosphatidylserine decarboxylase proenzyme of Yersinia pseudotuberculosis serotype O:1b (strain IP 31758).